A 202-amino-acid chain; its full sequence is Phospholipase A2 inhibitor gamma subunit A (202 aa).

An N-terminal signal peptide occupies residues 1 to 19 (MKSLQIICLLFIFVARGSC). 8 disulfide bridges follow: cysteine 22–cysteine 47, cysteine 25–cysteine 32, cysteine 40–cysteine 68, cysteine 74–cysteine 95, cysteine 96–cysteine 101, cysteine 119–cysteine 144, cysteine 137–cysteine 166, and cysteine 170–cysteine 192.

It belongs to the CNF-like-inhibitor family. As to quaternary structure, heteromer composed of subunit A and subunit B. Expressed by the liver.

It localises to the secreted. Its function is as follows. Inhibits the enzymatic activity of the phospholipase A2 (PLA2). The protein is Phospholipase A2 inhibitor gamma subunit A of Elaphe climacophora (Japanese rat snake).